A 231-amino-acid polypeptide reads, in one-letter code: Putative carboxymethylenebutenolidase (231 aa).

Catalysis depends on residues Cys-118, Asp-167, and His-199.

This sequence belongs to the dienelactone hydrolase family.

It carries out the reaction 2-(5-oxo-2,5-dihydrofuran-2-ylidene)acetate + H2O = 4-oxohex-2-enedioate + H(+). This is Putative carboxymethylenebutenolidase from Aquifex aeolicus (strain VF5).